The primary structure comprises 323 residues: Phospho-N-acetylmuramoyl-pentapeptide-transferase (323 aa).

Transmembrane regions (helical) follow at residues 12–32 (IVMA…IIIP), 58–78 (PTIG…VMVG), 84–104 (AMIA…DDLL), 120–140 (MILL…YIGT), 151–171 (INLG…VTNA), 177–197 (GLDG…GIIS), 200–220 (LGHI…LAFL), 229–250 (VFMG…ALIL), and 303–323 (KIVS…FASL).

The protein belongs to the glycosyltransferase 4 family. MraY subfamily. It depends on Mg(2+) as a cofactor.

It is found in the cell membrane. The enzyme catalyses UDP-N-acetyl-alpha-D-muramoyl-L-alanyl-gamma-D-glutamyl-meso-2,6-diaminopimeloyl-D-alanyl-D-alanine + di-trans,octa-cis-undecaprenyl phosphate = di-trans,octa-cis-undecaprenyl diphospho-N-acetyl-alpha-D-muramoyl-L-alanyl-D-glutamyl-meso-2,6-diaminopimeloyl-D-alanyl-D-alanine + UMP. Its pathway is cell wall biogenesis; peptidoglycan biosynthesis. In terms of biological role, catalyzes the initial step of the lipid cycle reactions in the biosynthesis of the cell wall peptidoglycan: transfers peptidoglycan precursor phospho-MurNAc-pentapeptide from UDP-MurNAc-pentapeptide onto the lipid carrier undecaprenyl phosphate, yielding undecaprenyl-pyrophosphoryl-MurNAc-pentapeptide, known as lipid I. The sequence is that of Phospho-N-acetylmuramoyl-pentapeptide-transferase from Clostridium perfringens (strain SM101 / Type A).